The primary structure comprises 446 residues: 4-aminobutyrate aminotransferase (446 aa).

An N6-(pyridoxal phosphate)lysine modification is found at K291.

Belongs to the class-III pyridoxal-phosphate-dependent aminotransferase family. The cofactor is pyridoxal 5'-phosphate.

It carries out the reaction 4-aminobutanoate + 2-oxoglutarate = succinate semialdehyde + L-glutamate. The catalysed reaction is (S)-3-amino-2-methylpropanoate + 2-oxoglutarate = 2-methyl-3-oxopropanoate + L-glutamate. The protein operates within amino-acid degradation; 4-aminobutanoate degradation. This Mycobacterium leprae (strain TN) protein is 4-aminobutyrate aminotransferase (gabT).